We begin with the raw amino-acid sequence, 319 residues long: Sulfate adenylyltransferase subunit 2 (319 aa).

It belongs to the PAPS reductase family. CysD subfamily. In terms of assembly, heterodimer composed of CysD, the smaller subunit, and CysN.

The enzyme catalyses sulfate + ATP + H(+) = adenosine 5'-phosphosulfate + diphosphate. It functions in the pathway sulfur metabolism; hydrogen sulfide biosynthesis; sulfite from sulfate: step 1/3. Its function is as follows. With CysN forms the ATP sulfurylase (ATPS) that catalyzes the adenylation of sulfate producing adenosine 5'-phosphosulfate (APS) and diphosphate, the first enzymatic step in sulfur assimilation pathway. APS synthesis involves the formation of a high-energy phosphoric-sulfuric acid anhydride bond driven by GTP hydrolysis by CysN coupled to ATP hydrolysis by CysD. This chain is Sulfate adenylyltransferase subunit 2, found in Methylobacterium radiotolerans (strain ATCC 27329 / DSM 1819 / JCM 2831 / NBRC 15690 / NCIMB 10815 / 0-1).